The primary structure comprises 209 residues: Thiamine-phosphate synthase (209 aa).

4-amino-2-methyl-5-(diphosphooxymethyl)pyrimidine is bound by residues 35–39 and Asn-67; that span reads QYRDK. Mg(2+)-binding residues include Asp-68 and Asp-86. Thr-105 contributes to the 4-amino-2-methyl-5-(diphosphooxymethyl)pyrimidine binding site. 132 to 134 contributes to the 2-[(2R,5Z)-2-carboxy-4-methylthiazol-5(2H)-ylidene]ethyl phosphate binding site; sequence SNT. Lys-135 provides a ligand contact to 4-amino-2-methyl-5-(diphosphooxymethyl)pyrimidine. A 2-[(2R,5Z)-2-carboxy-4-methylthiazol-5(2H)-ylidene]ethyl phosphate-binding site is contributed by Gly-162.

Belongs to the thiamine-phosphate synthase family. Mg(2+) is required as a cofactor.

The enzyme catalyses 2-[(2R,5Z)-2-carboxy-4-methylthiazol-5(2H)-ylidene]ethyl phosphate + 4-amino-2-methyl-5-(diphosphooxymethyl)pyrimidine + 2 H(+) = thiamine phosphate + CO2 + diphosphate. It carries out the reaction 2-(2-carboxy-4-methylthiazol-5-yl)ethyl phosphate + 4-amino-2-methyl-5-(diphosphooxymethyl)pyrimidine + 2 H(+) = thiamine phosphate + CO2 + diphosphate. It catalyses the reaction 4-methyl-5-(2-phosphooxyethyl)-thiazole + 4-amino-2-methyl-5-(diphosphooxymethyl)pyrimidine + H(+) = thiamine phosphate + diphosphate. Its pathway is cofactor biosynthesis; thiamine diphosphate biosynthesis; thiamine phosphate from 4-amino-2-methyl-5-diphosphomethylpyrimidine and 4-methyl-5-(2-phosphoethyl)-thiazole: step 1/1. In terms of biological role, condenses 4-methyl-5-(beta-hydroxyethyl)thiazole monophosphate (THZ-P) and 2-methyl-4-amino-5-hydroxymethyl pyrimidine pyrophosphate (HMP-PP) to form thiamine monophosphate (TMP). The polypeptide is Thiamine-phosphate synthase (Pseudomonas fluorescens (strain SBW25)).